The sequence spans 707 residues: Protein kinase C theta type (707 aa).

One can recognise a C2 domain in the interval 1 to 107 (MSPFLRIGLS…KNNGRTEIWL (107 aa)). Tyr-90 bears the Phosphotyrosine; by LCK mark. Residues 159–209 (CHEFTATFFPQPTFCSVCHEFVWGLNKQGYQCRQCNAAIHKKCIDKVIAKC) form a Phorbol-ester/DAG-type 1 zinc finger. The residue at position 219 (Thr-219) is a Phosphothreonine; by autocatalysis. The segment at 231 to 281 (PHRFKVYNYKSPTFCEHCGTLLWGLARQGLKCDACGMNVHHRCQTKVANLC) adopts a Phorbol-ester/DAG-type 2 zinc-finger fold. The tract at residues 327-365 (ETRPPCVPTPGKREPQGISWDSPLDGSNKSAGPPEPEVS) is disordered. Position 348 is a phosphoserine (Ser-348). Positions 380–634 (FILHKMLGKG…RGDIRQHPLF (255 aa)) constitute a Protein kinase domain. ATP is bound by residues 386 to 394 (LGKGSFGKV) and Lys-409. Asp-504 acts as the Proton acceptor in catalysis. The residue at position 538 (Thr-538) is a Phosphothreonine; by PDPK1. Residues 635–706 (REINWEELER…INPGMETLIC (72 aa)) enclose the AGC-kinase C-terminal domain. Residue Ser-676 is modified to Phosphoserine; by autocatalysis. Phosphoserine is present on Ser-685. Ser-695 carries the phosphoserine; by autocatalysis modification.

It belongs to the protein kinase superfamily. AGC Ser/Thr protein kinase family. PKC subfamily. Part of a membrane raft complex composed at least of BCL10, CARD11, MALT1 and IKBKB. Interacts with GLRX3 (via N-terminus). Interacts with ECT2. Interacts with CCDC88A/GIV; the interaction leads to phosphorylation of CCDC88A and inhibition of its guanine nucleotide exchange factor activity. Interacts with CD28. The cofactor is Mg(2+). Autophosphorylation at Thr-219 is required for targeting to the TCR and cellular function of PRKCQ upon antigen receptor ligation. Following TCR stimulation, phosphorylated at Tyr-90 and Ser-685. In terms of tissue distribution, T-lymphocytes and skeletal muscle.

Its subcellular location is the cytoplasm. It is found in the cell membrane. The enzyme catalyses L-seryl-[protein] + ATP = O-phospho-L-seryl-[protein] + ADP + H(+). It catalyses the reaction L-threonyl-[protein] + ATP = O-phospho-L-threonyl-[protein] + ADP + H(+). Its activity is regulated as follows. Novel PKCs (PRKCD, PRKCE, PRKCH and PRKCQ) are calcium-insensitive, but activated by diacylglycerol (DAG) and phosphatidylserine. Three specific sites; Thr-538 (activation loop of the kinase domain), Ser-676 (turn motif) and Ser-695 (hydrophobic region), need to be phosphorylated for its full activation. Functionally, calcium-independent, phospholipid- and diacylglycerol (DAG)-dependent serine/threonine-protein kinase that mediates non-redundant functions in T-cell receptor (TCR) signaling, including T-cells activation, proliferation, differentiation and survival, by mediating activation of multiple transcription factors such as NF-kappa-B, JUN, NFATC1 and NFATC2. In TCR-CD3/CD28-co-stimulated T-cells, is required for the activation of NF-kappa-B and JUN, which in turn are essential for IL2 production, and participates in the calcium-dependent NFATC1 and NFATC2 transactivation. Mediates the activation of the canonical NF-kappa-B pathway (NFKB1) by direct phosphorylation of CARD11 on several serine residues, inducing CARD11 association with lipid rafts and recruitment of the BCL10-MALT1 complex, which then activates IKK complex, resulting in nuclear translocation and activation of NFKB1. May also play an indirect role in activation of the non-canonical NF-kappa-B (NFKB2) pathway. In the signaling pathway leading to JUN activation, acts by phosphorylating the mediator STK39/SPAK and may not act through MAP kinases signaling. Plays a critical role in TCR/CD28-induced NFATC1 and NFATC2 transactivation by participating in the regulation of reduced inositol 1,4,5-trisphosphate generation and intracellular calcium mobilization. After costimulation of T-cells through CD28 can phosphorylate CBLB and is required for the ubiquitination and subsequent degradation of CBLB, which is a prerequisite for the activation of TCR. During T-cells differentiation, plays an important role in the development of T-helper 2 (Th2) cells following immune and inflammatory responses, and, in the development of inflammatory autoimmune diseases, is necessary for the activation of IL17-producing Th17 cells. May play a minor role in Th1 response. Upon TCR stimulation, mediates T-cell protective survival signal by phosphorylating BAD, thus protecting T-cells from BAD-induced apoptosis, and by up-regulating BCL-X(L)/BCL2L1 levels through NF-kappa-B and JUN pathways. In platelets, regulates signal transduction downstream of the ITGA2B, CD36/GP4, F2R/PAR1 and F2RL3/PAR4 receptors, playing a positive role in 'outside-in' signaling and granule secretion signal transduction. May relay signals from the activated ITGA2B receptor by regulating the uncoupling of WASP and WIPF1, thereby permitting the regulation of actin filament nucleation and branching activity of the Arp2/3 complex. May mediate inhibitory effects of free fatty acids on insulin signaling by phosphorylating IRS1, which in turn blocks IRS1 tyrosine phosphorylation and downstream activation of the PI3K/AKT pathway. Phosphorylates MSN (moesin) in the presence of phosphatidylglycerol or phosphatidylinositol. Phosphorylates PDPK1 at 'Ser-504' and 'Ser-532' and negatively regulates its ability to phosphorylate PKB/AKT1. Phosphorylates CCDC88A/GIV and inhibits its guanine nucleotide exchange factor activity. Phosphorylates and activates LRRK1, which phosphorylates RAB proteins involved in intracellular trafficking. This is Protein kinase C theta type (Prkcq) from Mus musculus (Mouse).